The sequence spans 435 residues: Adenylosuccinate synthetase (435 aa).

GTP-binding positions include 11–17 (GDEGKGK) and 39–41 (GHT). Residue D12 is the Proton acceptor of the active site. D12 and G39 together coordinate Mg(2+). IMP is bound by residues 12-15 (DEGK), 37-40 (NAGH), T134, R148, N230, T245, and R309. H40 acts as the Proton donor in catalysis. Position 305 to 311 (305 to 311 (VTTGRKR)) interacts with substrate. GTP-binding positions include R311, 337–339 (KLD), and 419–421 (GTG).

It belongs to the adenylosuccinate synthetase family. As to quaternary structure, homodimer. Requires Mg(2+) as cofactor.

The protein resides in the cytoplasm. The enzyme catalyses IMP + L-aspartate + GTP = N(6)-(1,2-dicarboxyethyl)-AMP + GDP + phosphate + 2 H(+). The protein operates within purine metabolism; AMP biosynthesis via de novo pathway; AMP from IMP: step 1/2. Plays an important role in the de novo pathway and in the salvage pathway of purine nucleotide biosynthesis. Catalyzes the first committed step in the biosynthesis of AMP from IMP. This chain is Adenylosuccinate synthetase, found in Zygosaccharomyces rouxii (strain ATCC 2623 / CBS 732 / NBRC 1130 / NCYC 568 / NRRL Y-229).